The following is a 250-amino-acid chain: Ribosomal RNA small subunit methyltransferase J (250 aa).

Residues 101 to 102, 117 to 118, 153 to 154, and Asp171 contribute to the S-adenosyl-L-methionine site; these read RD, ER, and SS.

The protein belongs to the methyltransferase superfamily. RsmJ family.

The protein resides in the cytoplasm. It catalyses the reaction guanosine(1516) in 16S rRNA + S-adenosyl-L-methionine = N(2)-methylguanosine(1516) in 16S rRNA + S-adenosyl-L-homocysteine + H(+). Specifically methylates the guanosine in position 1516 of 16S rRNA. The chain is Ribosomal RNA small subunit methyltransferase J from Escherichia coli (strain SMS-3-5 / SECEC).